Here is a 138-residue protein sequence, read N- to C-terminus: Small ribosomal subunit protein uS11c (138 aa).

Positions 1 to 22 are disordered; it reads MAKAIPKISSRRNGRIGSRKGA. Over residues 9–22 the composition is skewed to basic residues; that stretch reads SSRRNGRIGSRKGA.

It belongs to the universal ribosomal protein uS11 family. In terms of assembly, part of the 30S ribosomal subunit.

It localises to the plastid. The protein resides in the chloroplast. This is Small ribosomal subunit protein uS11c from Nicotiana tabacum (Common tobacco).